Consider the following 251-residue polypeptide: Pyrroloquinoline-quinone synthase (251 aa).

Belongs to the PqqC family.

It catalyses the reaction 6-(2-amino-2-carboxyethyl)-7,8-dioxo-1,2,3,4,7,8-hexahydroquinoline-2,4-dicarboxylate + 3 O2 = pyrroloquinoline quinone + 2 H2O2 + 2 H2O + H(+). It functions in the pathway cofactor biosynthesis; pyrroloquinoline quinone biosynthesis. In terms of biological role, ring cyclization and eight-electron oxidation of 3a-(2-amino-2-carboxyethyl)-4,5-dioxo-4,5,6,7,8,9-hexahydroquinoline-7,9-dicarboxylic-acid to PQQ. This is Pyrroloquinoline-quinone synthase from Klebsiella pneumoniae subsp. pneumoniae (strain ATCC 700721 / MGH 78578).